The primary structure comprises 388 residues: Putative [LysW]-aminoadipate semialdehyde/glutamate semialdehyde transaminase (388 aa).

Residues 100–101 (GT) and Phe-127 contribute to the pyridoxal 5'-phosphate site. Arg-130 contributes to the substrate binding site. Pyridoxal 5'-phosphate is bound at residue 211–214 (DEIQ). An N6-(pyridoxal phosphate)lysine modification is found at Lys-240. Residue Ser-268 participates in substrate binding. Thr-269 contributes to the pyridoxal 5'-phosphate binding site.

Belongs to the class-III pyridoxal-phosphate-dependent aminotransferase family. LysJ subfamily. Homodimer. It depends on pyridoxal 5'-phosphate as a cofactor.

Its subcellular location is the cytoplasm. The catalysed reaction is [amino-group carrier protein]-C-terminal-gamma-(L-lysyl)-L-glutamate + 2-oxoglutarate = [amino-group carrier protein]-C-terminal-N-(1-carboxy-5-oxopentan-1-yl)-L-glutamine + L-glutamate. The enzyme catalyses [amino-group carrier protein]-C-terminal-gamma-(L-ornithyl)-L-glutamate + 2-oxoglutarate = [amino-group carrier protein]-C-terminal-gamma-(L-glutamyl-5-semialdehyde)-L-glutamate + L-glutamate. It participates in amino-acid biosynthesis; L-lysine biosynthesis via AAA pathway; L-lysine from L-alpha-aminoadipate (Thermus route): step 4/5. It functions in the pathway amino-acid biosynthesis; L-arginine biosynthesis. Involved in both the arginine and lysine biosynthetic pathways. The protein is Putative [LysW]-aminoadipate semialdehyde/glutamate semialdehyde transaminase of Aeropyrum pernix (strain ATCC 700893 / DSM 11879 / JCM 9820 / NBRC 100138 / K1).